The primary structure comprises 287 residues: Energy-coupling factor transporter ATP-binding protein EcfA2 (287 aa).

Positions 3–246 (VKFSQVSYVY…TNYVNQLHLD (244 aa)) constitute an ABC transporter domain. 40–47 (GQTGSGKS) lines the ATP pocket.

The protein belongs to the ABC transporter superfamily. Energy-coupling factor EcfA family. As to quaternary structure, forms a stable energy-coupling factor (ECF) transporter complex composed of 2 membrane-embedded substrate-binding proteins (S component), 2 ATP-binding proteins (A component) and 2 transmembrane proteins (T component).

The protein resides in the cell membrane. ATP-binding (A) component of a common energy-coupling factor (ECF) ABC-transporter complex. Unlike classic ABC transporters this ECF transporter provides the energy necessary to transport a number of different substrates. The protein is Energy-coupling factor transporter ATP-binding protein EcfA2 of Staphylococcus saprophyticus subsp. saprophyticus (strain ATCC 15305 / DSM 20229 / NCIMB 8711 / NCTC 7292 / S-41).